The primary structure comprises 142 residues: Putative pre-16S rRNA nuclease (142 aa).

This sequence belongs to the YqgF nuclease family.

Its subcellular location is the cytoplasm. Its function is as follows. Could be a nuclease involved in processing of the 5'-end of pre-16S rRNA. In Blochmanniella floridana, this protein is Putative pre-16S rRNA nuclease.